Here is a 308-residue protein sequence, read N- to C-terminus: B3 domain-containing protein REM23 (308 aa).

The TF-B3 1 DNA-binding region spans 19 to 114 (FFKVLKRSDM…SFTVKIFNKD (96 aa)). The segment at 117 to 198 (EMMQPPQSRA…TERTQNSKRT (82 aa)) is disordered. A compositionally biased stretch (polar residues) spans 121–133 (PPQSRASFASSSR). Over residues 134–145 (VKTEQDVKREEE) the composition is skewed to basic and acidic residues. The segment covering 149–166 (SSDSRSRGPTTAAETNRG) has biased composition (polar residues). The segment covering 168-177 (SYKRKLNFGK) has biased composition (basic residues). Residues 178 to 198 (KKAEETQTYKRTERTQNSKRT) are compositionally biased toward basic and acidic residues. The segment at residues 216–308 (VAGFKIFISK…LELLLVVSKP (93 aa)) is a DNA-binding region (TF-B3 2).

It localises to the nucleus. The protein is B3 domain-containing protein REM23 (REM23) of Arabidopsis thaliana (Mouse-ear cress).